The chain runs to 194 residues: Putative manganese efflux pump MntP (194 aa).

6 helical membrane-spanning segments follow: residues 3-23 (PITTLLIGIAMSTDAFAAAIG), 37-57 (LYVAVIFGVIETATPIAGWLL), 65-85 (IATFDHWIAFGLLGGLGIHMI), 112-132 (LAATALATSIDAAAIGISMAF), 137-157 (IGIVAAVIGLCTFTMVIFGVM), and 170-190 (AEIVGGIILIIVGSTILYEHL).

The protein belongs to the MntP (TC 9.B.29) family.

It localises to the cell inner membrane. Probably functions as a manganese efflux pump. The polypeptide is Putative manganese efflux pump MntP (Xylella fastidiosa (strain M23)).